An 858-amino-acid polypeptide reads, in one-letter code: Toll-like receptor 5 (858 aa).

Positions 1 to 20 (MGDHLDLLLGVVLMAGPVFG) are cleaved as a signal peptide. The Extracellular segment spans residues 21-639 (IPSCSFDGRI…DEEEVLKSLK (619 aa)). Residues Asn37 and Asn46 are each glycosylated (N-linked (GlcNAc...) asparagine). LRR repeat units follow at residues 45 to 68 (LNTT…SFPF), 71 to 93 (QLQL…AFRN), 95 to 117 (PNLR…AFQG), 120 to 143 (HLFE…YFRN), 146 to 166 (ALTR…HPSF), 171 to 192 (SLKS…ELEP), 197 to 211 (TLSF…LYSR), 214 to 229 (VDWG…MVLE), and 234 to 235 (SG). N-linked (GlcNAc...) asparagine glycosylation is present at Asn245. LRR repeat units lie at residues 260-284 (LAHH…TFAG), 289-301 (SVRH…GFVF), 313-334 (DLKV…AFYG), 337-355 (NLQV…YSSN), 385-401 (KLQT…TIHF), 412-431 (GNKL…IHLS), 449-470 (HLQI…QTPS), 474-495 (SLEQ…ELCW), 503-524 (HLQV…VFSH), 527-546 (ALRG…HNDL), and 549-567 (NLEI…NPDV). A glycan (N-linked (GlcNAc...) asparagine) is linked at Asn342. Asn422 carries N-linked (GlcNAc...) asparagine glycosylation. Residues 579–631 (NKFICECELSTFINWLNHTNVTIAGPPADIYCVYPDSFSGVSLFSLSTEGCDE) enclose the LRRCT domain. Disulfide bonds link Cys583–Cys610 and Cys585–Cys629. 2 N-linked (GlcNAc...) asparagine glycosylation sites follow: Asn595 and Asn598. A helical transmembrane segment spans residues 640–660 (FSLFIVCTVTLTLFLMTILTV). Residues 661–858 (TKFRGFCFIC…IPLQTVATIS (198 aa)) are Cytoplasmic-facing. Residues 691 to 836 (YKYDAYLCFS…WFLHKLSQQI (146 aa)) enclose the TIR domain. Tyr798 bears the Phosphotyrosine mark. Ser805 carries the phosphoserine; by PKD/PRKD1 modification.

Belongs to the Toll-like receptor family. Homodimer. Interacts with MYD88 (via TIR domain). Interacts with TICAM1 (via TIR domain). Interacts with UNC93B1; this interaction is essential for proper TLR5 localization to the plasma membrane. Post-translationally, phosphorylated at Ser-805 by PKD/PRKD1; phosphorylation induces the production of inflammatory cytokines. Phosphorylated at Tyr-798 upon flagellin binding; required for signaling. As to expression, highly expressed on the basolateral surface of intestinal epithelia. Expressed also in other cells such as lung epithelial cells.

It is found in the cell membrane. In terms of biological role, pattern recognition receptor (PRR) located on the cell surface that participates in the activation of innate immunity and inflammatory response. Recognizes small molecular motifs named pathogen-associated molecular pattern (PAMPs) expressed by pathogens and microbe-associated molecular patterns (MAMPs) usually expressed by resident microbiota. Upon ligand binding such as bacterial flagellins, recruits intracellular adapter proteins MYD88 and TRIF leading to NF-kappa-B activation, cytokine secretion and induction of the inflammatory response. Plays thereby an important role in the relationship between the intestinal epithelium and enteric microbes and contributes to the gut microbiota composition throughout life. The chain is Toll-like receptor 5 (TLR5) from Homo sapiens (Human).